The following is a 147-amino-acid chain: Bis(5'-nucleosyl)-tetraphosphatase [asymmetrical] (147 aa).

Residue Ala-2 is modified to N-acetylalanine. The Nudix hydrolase domain maps to 2-139; that stretch reads ALRACGLIIF…EMKATLQEGH (138 aa). A Nudix box motif is present at residues 43 to 64; it reads GHVDPGENDLETALRETREETG.

Belongs to the Nudix hydrolase family. Requires a divalent metal cation as cofactor.

The catalysed reaction is P(1),P(4)-bis(5'-guanosyl) tetraphosphate + H2O = GMP + GTP + 2 H(+). It catalyses the reaction a 5'-end CoA-ribonucleoside in mRNA + H2O = a 5'-end phospho-adenosine-phospho-ribonucleoside in mRNA + (R)-4'-phosphopantetheine + 2 H(+). The enzyme catalyses a 5'-end FAD-phospho-ribonucleoside in mRNA + H2O = a 5'-end phospho-adenosine-phospho-ribonucleoside in mRNA + FMN + 2 H(+). Functionally, catalyzes the asymmetric hydrolysis of diadenosine 5',5'''-P1,P4-tetraphosphate (Ap4A) to yield AMP and ATP. Exhibits decapping activity towards FAD-capped RNAs and dpCoA-capped RNAs in vitro. The protein is Bis(5'-nucleosyl)-tetraphosphatase [asymmetrical] (Nudt2) of Mus musculus (Mouse).